The primary structure comprises 444 residues: E1B 55 kDa protein (444 aa).

The interval 1-35 (MEQNADMEPDRQVNQRPPRFRARGAGVRGRGRVRR) is disordered. Phosphoserine occurs at positions 438 and 439.

This sequence belongs to the adenoviridae E1B 55 kDa protein family. As to quaternary structure, interacts with host PML-4 and PML-5; this interaction promotes efficient subnuclear targeting of E1B-55K to PML nuclear bodies. Interacts with E4-ORF3 protein. Interacts with E4-ORF6 protein.

The protein localises to the host nucleus. The protein resides in the host cytoplasm. Plays a major role to prevent cellular inhibition of viral genome replication. Assembles an SCF-like E3 ubiquitin ligase complex based on the cellular proteins ELOB, ELOC, CUL5 and RBX1, in cooperation with viral E4orf6. This viral RING-type ligase ubiquitinates cellular substrates and targets them to proteasomal degradation: TP53/p53, LIG4, MRE11-RAD50-NBS1 (MRN) complex, ITGA3, DAXX and BLM. E1B-55K probably acts as the substrate-specific adapter of the SCF-like E3 ubiquitin ligase complex. Degradation of host TP53/p53 activity is essential for preventing E1A-induced TP53 accumulation that would otherwise lead to cell apoptosis and growth arrest. E1B-55K also inactivates TP53 transcription-factor activity by binding its transactivation domain. E1B-55K also functions as a SUMO1 E3 ligase for TP53 which causes the latter to be sequestered in promyelocytic leukemia (PML) nuclear bodies thereby contributing to maximal inhibition of TP53 function. This Canis lupus familiaris (Dog) protein is E1B 55 kDa protein.